The sequence spans 369 residues: Peptide chain release factor 2 (369 aa).

At glutamine 252 the chain carries N5-methylglutamine.

This sequence belongs to the prokaryotic/mitochondrial release factor family. In terms of processing, methylated by PrmC. Methylation increases the termination efficiency of RF2.

It localises to the cytoplasm. Functionally, peptide chain release factor 2 directs the termination of translation in response to the peptide chain termination codons UGA and UAA. This is Peptide chain release factor 2 from Staphylococcus aureus (strain bovine RF122 / ET3-1).